A 620-amino-acid polypeptide reads, in one-letter code: Dopamine beta-hydroxylase (620 aa).

Over Met1–Arg19 the chain is Cytoplasmic. Residues Glu20–Leu40 form a helical; Signal-anchor for type II membrane protein membrane-spanning segment. Over Gln41–His620 the chain is Intragranular. A DOMON domain is found at Gly60–Leu176. Asn67 and Asn187 each carry an N-linked (GlcNAc...) asparagine glycan. 6 cysteine pairs are disulfide-bonded: Cys157-Cys599, Cys235-Cys286, Cys272-Cys298, Cys393-Cys506, Cys397-Cys568, and Cys469-Cys491. Tyr233 is an active-site residue. Residues His265 and His266 each coordinate Cu(2+). Asn274 carries an N-linked (GlcNAc...) asparagine glycan. Cu(2+) is bound at residue His336. The residue at position 349 (Ser349) is a Phosphoserine; by CaMK. The active site involves His415. Cu(2+) is bound by residues His415 and His417. Asn475 carries an N-linked (GlcNAc...) asparagine glycan. Met490 provides a ligand contact to Cu(2+). Asn569 and Asn587 each carry an N-linked (GlcNAc...) asparagine glycan.

Belongs to the copper type II ascorbate-dependent monooxygenase family. Homotetramer; composed of two disulfide-linked dimers. Requires Cu(2+) as cofactor. In terms of processing, proteolytic cleavage after the membrane-anchor leads to the release of the soluble form. Post-translationally, N-glycosylated. In terms of tissue distribution, chromaffin granules of the adrenal medulla and synaptic vesicles of the sympathetic nervous system.

It is found in the cytoplasmic vesicle. Its subcellular location is the secretory vesicle lumen. The protein localises to the secretory vesicle. It localises to the chromaffin granule lumen. The protein resides in the secreted. It is found in the secretory vesicle membrane. Its subcellular location is the chromaffin granule membrane. The catalysed reaction is dopamine + 2 L-ascorbate + O2 = (R)-noradrenaline + 2 monodehydro-L-ascorbate radical + H2O. The protein operates within catecholamine biosynthesis; (R)-noradrenaline biosynthesis; (R)-noradrenaline from dopamine: step 1/1. Catalyzes the hydroxylation of dopamine to noradrenaline (also known as norepinephrine), and is thus vital for regulation of these neurotransmitters. This Rattus norvegicus (Rat) protein is Dopamine beta-hydroxylase (Dbh).